Reading from the N-terminus, the 66-residue chain is Large ribosomal subunit protein uL29 (66 aa).

The protein belongs to the universal ribosomal protein uL29 family.

The protein is Large ribosomal subunit protein uL29 of Caldanaerobacter subterraneus subsp. tengcongensis (strain DSM 15242 / JCM 11007 / NBRC 100824 / MB4) (Thermoanaerobacter tengcongensis).